The chain runs to 284 residues: P2R1A-PPP2R2A-interacting phosphatase regulator 1 (284 aa).

The disordered stretch occupies residues 1 to 65 (MAQEKMELDL…RRNSTTFPSR (65 aa)). Positions 20–29 (EGGGPGGGGL) are enriched in gly residues. Serine 32 bears the Phosphoserine mark. Phosphoserine; by CHEK1 is present on serine 34. Residues serine 42, serine 45, serine 59, and serine 73 each carry the phosphoserine modification. Lysine 86 participates in a covalent cross-link: Glycyl lysine isopeptide (Lys-Gly) (interchain with G-Cter in SUMO1). Residues serine 140 and serine 144 each carry the phosphoserine modification. Threonine 146 is modified (phosphothreonine). The tract at residues 164–185 (SNGLPPSPIPSPTTRFTTRRSQ) is disordered. Low complexity predominate over residues 175–185 (PTTRFTTRRSQ). Phosphoserine occurs at positions 184 and 186. Residues 233–284 (GVCVSSDTLDGNSSSAGSSCNSPAKVSTTTDSPVSPAQAASPFIPVDELSSK) form a disordered region. Residues 243 to 254 (GNSSSAGSSCNS) show a composition bias toward low complexity. Residues 256–267 (AKVSTTTDSPVS) show a composition bias toward polar residues. A phosphoserine mark is found at serine 264, serine 267, and serine 273.

It belongs to the FAM122 family. Interacts with PPP2CA and PPP2R1A. Interacts (via its N-terminus) with PPP2R2A; the interaction is direct and this interaction inhibits PP2A activity. The CHEK1-mediated Ser-34 phosphorylated form interacts with 14-3-3 proteins. Post-translationally, CHEK1-mediated phosphorylation at Ser-34 negatively regulates its ability to inhibit serine/threonine-protein phosphatase 2A (PP2A) activity. Phosphorylation leads to its release from the PP2A complex and its sequestration by 14-3-3 proteins in the cytoplasm resulting in its inability to translocate to the nucleus, where it otherwise inhibits PP2A.

Its subcellular location is the nucleus. It is found in the cytoplasm. Its function is as follows. Acts as an inhibitor of serine/threonine-protein phosphatase 2A (PP2A) activity. Inhibits PP2A activity by blocking the substrate binding site on PPP2R2A and the active site of PPP2CA. Potentiates ubiquitin-mediated proteasomal degradation of serine/threonine-protein phosphatase 2A catalytic subunit alpha (PPP2CA). Inhibits PP2A-mediated dephosphorylation of WEE1, promoting ubiquitin-mediated proteolysis of WEE1, thereby releasing G2/M checkpoint. The sequence is that of P2R1A-PPP2R2A-interacting phosphatase regulator 1 from Mus musculus (Mouse).